The primary structure comprises 95 residues: Small ribosomal subunit protein bS6 (95 aa).

Belongs to the bacterial ribosomal protein bS6 family.

Functionally, binds together with bS18 to 16S ribosomal RNA. The protein is Small ribosomal subunit protein bS6 of Geobacillus sp. (strain WCH70).